The sequence spans 354 residues: Tyrosine recombinase XerH (354 aa).

The Core-binding (CB) domain maps to 48–134 (LTKGVKNIDE…AVINFFDFLD (87 aa)). Residues 163–346 (KLPEFMSKEE…DNDKLKLAAQ (184 aa)) enclose the Tyr recombinase domain. Residues Arg-205, Lys-231, His-298, Arg-301, and His-324 contribute to the active site. Tyr-333 acts as the O-(3'-phospho-DNA)-tyrosine intermediate in catalysis.

This sequence belongs to the 'phage' integrase family. XerH subfamily.

Its subcellular location is the cytoplasm. FtsK is required for efficient recombination. In terms of biological role, site-specific tyrosine recombinase, which acts by catalyzing the cutting and rejoining of the recombining DNA molecules. Binds to the complete atypical dif motif (difH) site and to both halves separately. This is Tyrosine recombinase XerH from Campylobacter jejuni subsp. jejuni serotype O:2 (strain ATCC 700819 / NCTC 11168).